The sequence spans 264 residues: MKQYLDLMKHILAEGVDKSDRTGTGTRSVFGYQMRFDLSKGFPLVSTKKCHMRSIIHELLWFLKGETNVAYLRENKVSIWDEWADDNGDLGPVYGAQWRSWPTQSGDAIDQISQVIAQIKSQPDSRRLIVSAWNVGELDKMALAPCHAFFQFYVADGKLSCQLYQRSCDVFLGLPFNIASYALLTMMVAQQCDLALGDFVWTGGDTHLYSNHMEQTALQLSREPMPLPTMTILRRPESIFDYQFDDFELTNYAPHPHIKAPVAV.

Arg-21 is a binding site for dUMP. His-51 serves as a coordination point for (6R)-5,10-methylene-5,6,7,8-tetrahydrofolate. DUMP is bound at residue 126–127 (RR). The active-site Nucleophile is Cys-146. DUMP is bound by residues 166–169 (RSCD), Asn-177, and 207–209 (HLY). Asp-169 is a (6R)-5,10-methylene-5,6,7,8-tetrahydrofolate binding site. Residue Ala-263 coordinates (6R)-5,10-methylene-5,6,7,8-tetrahydrofolate.

It belongs to the thymidylate synthase family. Bacterial-type ThyA subfamily. As to quaternary structure, homodimer.

The protein resides in the cytoplasm. It catalyses the reaction dUMP + (6R)-5,10-methylene-5,6,7,8-tetrahydrofolate = 7,8-dihydrofolate + dTMP. It participates in pyrimidine metabolism; dTTP biosynthesis. In terms of biological role, catalyzes the reductive methylation of 2'-deoxyuridine-5'-monophosphate (dUMP) to 2'-deoxythymidine-5'-monophosphate (dTMP) while utilizing 5,10-methylenetetrahydrofolate (mTHF) as the methyl donor and reductant in the reaction, yielding dihydrofolate (DHF) as a by-product. This enzymatic reaction provides an intracellular de novo source of dTMP, an essential precursor for DNA biosynthesis. The chain is Thymidylate synthase from Shewanella baltica (strain OS185).